We begin with the raw amino-acid sequence, 568 residues long: MAGUK p55 subfamily member 3 (568 aa).

2 consecutive L27 domains span residues 6-60 (EDSG…ERQS) and 61-118 (PTPV…FDPV). One can recognise a PDZ domain in the interval 137–218 (IVRLVKNKEP…SITLKIIPAT (82 aa)). One can recognise an SH3 domain in the interval 226-296 (DSKVFMRALF…PSKQFQERRL (71 aa)). Ser307 is modified (phosphoserine). The 184-residue stretch at 385-568 (PRLVVLIGSL…QEPAASSELS (184 aa)) folds into the Guanylate kinase-like domain.

The protein belongs to the MAGUK family. In terms of assembly, interacts with HTR2C; this interaction stabilizes the receptor at the plasma membrane and prevents the desensitization of the HTR2C receptor-mediated calcium response. Interacts with HTR2A. Interacts with HTR4. Interacts (via PDZ domain) with CADM1 (via C-terminus)Interacts (via PDZ domain) with CADM1; this interaction connects CADM1 with DLG1. Interacts (via Guanylate kinase-like domain) with PALS1. Interacts with DLG1 (via N-terminus); this interaction connects CADM1 with DLG1 and links CADM1 with the regulatory subunit of phosphoinositide-3-kinase (PI3K) by forming a multiprotein complex and participates in cell spreading. In terms of tissue distribution, expressed in brain, skeletal muscle, testis, kidney, and lung.

The protein localises to the apical cell membrane. Its subcellular location is the cell membrane. The protein resides in the cell junction. It is found in the adherens junction. Its function is as follows. Participates in cell spreading through the phosphoinositide-3-kinase (PI3K) pathway by connecting CADM1 to DLG1 and the regulatory subunit of phosphoinositide-3-kinase (PI3K). Stabilizes HTR2C at the plasma membrane and prevents its desensitization. May participates in the maintenance of adherens junctions. The protein is MAGUK p55 subfamily member 3 of Mus musculus (Mouse).